The following is a 59-amino-acid chain: Large ribosomal subunit protein bL32 (59 aa).

The segment at 1 to 59 is disordered; sequence MAVQQNKKSPSKRGMHRSHDALTAPALSVDSTTGEVHRPHHISPNGMYRGRKVVKVKGE. Basic residues predominate over residues 49–59; it reads RGRKVVKVKGE.

The protein belongs to the bacterial ribosomal protein bL32 family.

The polypeptide is Large ribosomal subunit protein bL32 (rpmF) (Neisseria meningitidis serogroup A / serotype 4A (strain DSM 15465 / Z2491)).